The sequence spans 566 residues: Unconventional myosin-VIIa (566 aa).

The Myosin motor domain maps to 67 to 566; it reads MMEDMIQHLG…AGVVYYESQG (500 aa). 160–167 is an ATP binding site; sequence GESGAGKT.

The protein belongs to the TRAFAC class myosin-kinesin ATPase superfamily. Myosin family. Might homodimerize in a two headed molecule through the formation of a coiled-coil rod. Identified in a complex with USH1C and USH1G. Interacts with MYRIP. Interacts with RPE65. Interacts with CIB2. May interact with CALM. Interacts with WHRN. Interacts with PLEKHB1 (via PH domain). Interacts with PCDH15. Interacts with TWF2. Interacts with USH1G. Interacts with MYH9. Interacts (via MyTH4-FERM domains) with cytoplasmic regions of ADGRV1 and USH2A. Interacts with PDZD7 (via MyTH4-FERM domains). Interacts with CALML4.

It localises to the cytoplasm. The protein resides in the cell cortex. The protein localises to the cytoskeleton. It is found in the synapse. Functionally, myosins are actin-based motor molecules with ATPase activity. Unconventional myosins serve in intracellular movements. Their highly divergent tails bind to membranous compartments, which are then moved relative to actin filaments. In the retina, plays an important role in the renewal of the outer photoreceptor disks. Plays an important role in the distribution and migration of retinal pigment epithelial (RPE) melanosomes and phagosomes, and in the regulation of opsin transport in retinal photoreceptors. In the inner ear, plays an important role in differentiation, morphogenesis and organization of cochlear hair cell bundles. Motor protein that is a part of the functional network formed by USH1C, USH1G, CDH23 and MYO7A that mediates mechanotransduction in cochlear hair cells. Required for normal hearing. Involved in hair-cell vesicle trafficking of aminoglycosides, which are known to induce ototoxicity. The chain is Unconventional myosin-VIIa (MYO7A) from Sus scrofa (Pig).